Here is a 158-residue protein sequence, read N- to C-terminus: 2-C-methyl-D-erythritol 2,4-cyclodiphosphate synthase (158 aa).

A divalent metal cation contacts are provided by D9 and H11. 4-CDP-2-C-methyl-D-erythritol 2-phosphate-binding positions include 9 to 11 (DVH) and 35 to 36 (HS). H43 contributes to the a divalent metal cation binding site. 4-CDP-2-C-methyl-D-erythritol 2-phosphate-binding positions include 57–59 (DIG), 62–66 (FPDTD), 101–107 (AQKPKMA), 133–136 (TTTE), F140, and R143.

The protein belongs to the IspF family. Homotrimer. It depends on a divalent metal cation as a cofactor.

The catalysed reaction is 4-CDP-2-C-methyl-D-erythritol 2-phosphate = 2-C-methyl-D-erythritol 2,4-cyclic diphosphate + CMP. Its pathway is isoprenoid biosynthesis; isopentenyl diphosphate biosynthesis via DXP pathway; isopentenyl diphosphate from 1-deoxy-D-xylulose 5-phosphate: step 4/6. Involved in the biosynthesis of isopentenyl diphosphate (IPP) and dimethylallyl diphosphate (DMAPP), two major building blocks of isoprenoid compounds. Catalyzes the conversion of 4-diphosphocytidyl-2-C-methyl-D-erythritol 2-phosphate (CDP-ME2P) to 2-C-methyl-D-erythritol 2,4-cyclodiphosphate (ME-CPP) with a corresponding release of cytidine 5-monophosphate (CMP). The protein is 2-C-methyl-D-erythritol 2,4-cyclodiphosphate synthase of Bacillus cereus (strain ATCC 10987 / NRS 248).